We begin with the raw amino-acid sequence, 182 residues long: RNA chaperone ProQ (182 aa).

Positions 125–160 are disordered; it reads EQRKEQRKDFFKKKAREERNAKTMNKAVKKGSPKKD.

The protein belongs to the ProQ family.

The protein resides in the cytoplasm. Functionally, RNA chaperone with significant RNA binding, RNA strand exchange and RNA duplexing activities. The polypeptide is RNA chaperone ProQ (Haemophilus ducreyi (strain 35000HP / ATCC 700724)).